The following is a 238-amino-acid chain: 4-hydroxy-tetrahydrodipicolinate reductase (238 aa).

12 to 17 (GASGRM) is an NAD(+) binding site. Residue arginine 40 participates in NADP(+) binding. Residues 93-95 (GTT) and 117-120 (ASNF) contribute to the NAD(+) site. Histidine 149 serves as the catalytic Proton donor/acceptor. Histidine 150 lines the (S)-2,3,4,5-tetrahydrodipicolinate pocket. The Proton donor role is filled by lysine 153. A (S)-2,3,4,5-tetrahydrodipicolinate-binding site is contributed by 159-160 (GT).

This sequence belongs to the DapB family.

It is found in the cytoplasm. It carries out the reaction (S)-2,3,4,5-tetrahydrodipicolinate + NAD(+) + H2O = (2S,4S)-4-hydroxy-2,3,4,5-tetrahydrodipicolinate + NADH + H(+). The enzyme catalyses (S)-2,3,4,5-tetrahydrodipicolinate + NADP(+) + H2O = (2S,4S)-4-hydroxy-2,3,4,5-tetrahydrodipicolinate + NADPH + H(+). It participates in amino-acid biosynthesis; L-lysine biosynthesis via DAP pathway; (S)-tetrahydrodipicolinate from L-aspartate: step 4/4. Functionally, catalyzes the conversion of 4-hydroxy-tetrahydrodipicolinate (HTPA) to tetrahydrodipicolinate. The polypeptide is 4-hydroxy-tetrahydrodipicolinate reductase (Xanthomonas euvesicatoria pv. vesicatoria (strain 85-10) (Xanthomonas campestris pv. vesicatoria)).